A 199-amino-acid chain; its full sequence is 7-methyl-GTP pyrophosphatase (199 aa).

Asp-76 functions as the Proton acceptor in the catalytic mechanism.

Belongs to the Maf family. YceF subfamily. The cofactor is a divalent metal cation.

The protein resides in the cytoplasm. It carries out the reaction N(7)-methyl-GTP + H2O = N(7)-methyl-GMP + diphosphate + H(+). Functionally, nucleoside triphosphate pyrophosphatase that hydrolyzes 7-methyl-GTP (m(7)GTP). May have a dual role in cell division arrest and in preventing the incorporation of modified nucleotides into cellular nucleic acids. This is 7-methyl-GTP pyrophosphatase from Hahella chejuensis (strain KCTC 2396).